The sequence spans 492 residues: Probable malate:quinone oxidoreductase 1 (492 aa).

The protein belongs to the MQO family. FAD serves as cofactor.

The enzyme catalyses (S)-malate + a quinone = a quinol + oxaloacetate. It participates in carbohydrate metabolism; tricarboxylic acid cycle; oxaloacetate from (S)-malate (quinone route): step 1/1. In Staphylococcus aureus (strain MRSA252), this protein is Probable malate:quinone oxidoreductase 1.